The primary structure comprises 735 residues: Transmembrane channel-like protein 7 (735 aa).

Residues 1–164 (MSEFGAGAEL…QSYFSFLRFL (164 aa)) lie on the Extracellular side of the membrane. Residues 165–185 (VLLNFLMFILMFSFVTLPAVI) form a helical membrane-spanning segment. The Cytoplasmic portion of the chain corresponds to 186 to 233 (SNYGIFNSSSTKISPNNTEPYCTVYTPSGNKGLVYFYTYLKDLLTGTG). The helical transmembrane segment at 234–254 (FLEVTVLFYGYYTIDAAWFSV) threads the bilayer. At 255–258 (LRYN) the chain is on the extracellular side. The helical transmembrane segment at 259–279 (LPLAYLLTTFAYLALSFVWII) threads the bilayer. Over 280-355 (KRSVERFRQH…TMKEKLQIYS (76 aa)) the chain is Cytoplasmic. Residues 356 to 376 (LRIFINIIVIAVLSGCFYSIY) traverse the membrane as a helical segment. Topologically, residues 377–403 (RATVFSQENSSVSIRRNVMIANLLVQY) are extracellular. N385 is a glycosylation site (N-linked (GlcNAc...) asparagine). A helical transmembrane segment spans residues 404 to 424 (LPSIVITSANFIAPQIFSFLI). Over 425-436 (RFEDYSAAFEIR) the chain is Cytoplasmic. Residues 437–457 (LTLIRCVFVRLANVGVLLFSL) form a helical membrane-spanning segment. At 458-488 (WSQIHCDNDQCKACGYDYELYPCWESAVGQE) the chain is on the extracellular side. Residues 489–509 (MYKLLIFDFMIIIAMTLFVDF) traverse the membrane as a helical segment. The Cytoplasmic segment spans residues 510–548 (PRKLLVTYCSWKLVQWWGLQEFGISDNVLEIIYGQTICW). A helical membrane pass occupies residues 549–569 (IGTFFSPLLPAIATIKYFIIF). Residues 570 to 594 (YIKKISLIHTRKPASRPIRASSSNF) lie on the Extracellular side of the membrane. Residues 595–615 (FFLAVLLIGLILAFVPLGVSI) traverse the membrane as a helical segment. Over 616–634 (ALISSSKACGPFRNFNTSW) the chain is Cytoplasmic. Residues 635-655 (AIVPYTILEFPIGLQKFLYGI) form a helical membrane-spanning segment. Residues 656-658 (ASE) are Extracellular-facing. Residues 659-679 (AFAVPFFVIACLFMFYFIALA) form a helical membrane-spanning segment. At 680-735 (GAHKRVVEQLREQLVTESRDKLFLLEKLSEAQKNSGKPQKARKLTSSWLLEPLDKG) the chain is on the cytoplasmic side. The disordered stretch occupies residues 710-735 (AQKNSGKPQKARKLTSSWLLEPLDKG).

It belongs to the TMC family.

The protein localises to the membrane. In terms of biological role, probable component of an ion channel. In Gallus gallus (Chicken), this protein is Transmembrane channel-like protein 7 (Tmc7).